The chain runs to 141 residues: Large ribosomal subunit protein uL16c (141 aa).

The protein belongs to the universal ribosomal protein uL16 family. Part of the 50S ribosomal subunit.

The protein localises to the plastid. Its subcellular location is the chloroplast. The sequence is that of Large ribosomal subunit protein uL16c from Zygnema circumcarinatum (Green alga).